A 274-amino-acid polypeptide reads, in one-letter code: 2,3,4,5-tetrahydropyridine-2,6-dicarboxylate N-succinyltransferase (274 aa).

R107 and D144 together coordinate substrate.

The protein belongs to the transferase hexapeptide repeat family. Homotrimer.

It localises to the cytoplasm. The catalysed reaction is (S)-2,3,4,5-tetrahydrodipicolinate + succinyl-CoA + H2O = (S)-2-succinylamino-6-oxoheptanedioate + CoA. It functions in the pathway amino-acid biosynthesis; L-lysine biosynthesis via DAP pathway; LL-2,6-diaminopimelate from (S)-tetrahydrodipicolinate (succinylase route): step 1/3. The sequence is that of 2,3,4,5-tetrahydropyridine-2,6-dicarboxylate N-succinyltransferase from Cereibacter sphaeroides (strain ATCC 17029 / ATH 2.4.9) (Rhodobacter sphaeroides).